The following is a 344-amino-acid chain: Tetraacyldisaccharide 4'-kinase (344 aa).

65–72 lines the ATP pocket; sequence HAGGTGKT.

It belongs to the LpxK family.

The enzyme catalyses a lipid A disaccharide + ATP = a lipid IVA + ADP + H(+). It functions in the pathway glycolipid biosynthesis; lipid IV(A) biosynthesis; lipid IV(A) from (3R)-3-hydroxytetradecanoyl-[acyl-carrier-protein] and UDP-N-acetyl-alpha-D-glucosamine: step 6/6. In terms of biological role, transfers the gamma-phosphate of ATP to the 4'-position of a tetraacyldisaccharide 1-phosphate intermediate (termed DS-1-P) to form tetraacyldisaccharide 1,4'-bis-phosphate (lipid IVA). The chain is Tetraacyldisaccharide 4'-kinase from Neisseria meningitidis serogroup A / serotype 4A (strain DSM 15465 / Z2491).